Here is a 256-residue protein sequence, read N- to C-terminus: 5'-nucleotidase SurE (256 aa).

Residues Asp8, Asp9, Ser39, and Asn91 each contribute to the a divalent metal cation site.

Belongs to the SurE nucleotidase family. A divalent metal cation is required as a cofactor.

It localises to the cytoplasm. It carries out the reaction a ribonucleoside 5'-phosphate + H2O = a ribonucleoside + phosphate. Its function is as follows. Nucleotidase that shows phosphatase activity on nucleoside 5'-monophosphates. This is 5'-nucleotidase SurE from Marinobacter nauticus (strain ATCC 700491 / DSM 11845 / VT8) (Marinobacter aquaeolei).